The primary structure comprises 192 residues: Fe/S biogenesis protein NfuA (192 aa).

2 residues coordinate [4Fe-4S] cluster: Cys-149 and Cys-152.

It belongs to the NfuA family. As to quaternary structure, homodimer. [4Fe-4S] cluster is required as a cofactor.

In terms of biological role, involved in iron-sulfur cluster biogenesis. Binds a 4Fe-4S cluster, can transfer this cluster to apoproteins, and thereby intervenes in the maturation of Fe/S proteins. Could also act as a scaffold/chaperone for damaged Fe/S proteins. The protein is Fe/S biogenesis protein NfuA of Shewanella loihica (strain ATCC BAA-1088 / PV-4).